We begin with the raw amino-acid sequence, 187 residues long: GTP cyclohydrolase 1 (187 aa).

The Zn(2+) site is built by Cys-78, His-81, and Cys-149.

This sequence belongs to the GTP cyclohydrolase I family. As to quaternary structure, toroid-shaped homodecamer, composed of two pentamers of five dimers.

It catalyses the reaction GTP + H2O = 7,8-dihydroneopterin 3'-triphosphate + formate + H(+). It functions in the pathway cofactor biosynthesis; 7,8-dihydroneopterin triphosphate biosynthesis; 7,8-dihydroneopterin triphosphate from GTP: step 1/1. The polypeptide is GTP cyclohydrolase 1 (Wolinella succinogenes (strain ATCC 29543 / DSM 1740 / CCUG 13145 / JCM 31913 / LMG 7466 / NCTC 11488 / FDC 602W) (Vibrio succinogenes)).